A 481-amino-acid polypeptide reads, in one-letter code: UDP-N-acetylmuramate--L-alanine ligase (481 aa).

122 to 128 (GVHGKTT) is an ATP binding site.

The protein belongs to the MurCDEF family.

It localises to the cytoplasm. The enzyme catalyses UDP-N-acetyl-alpha-D-muramate + L-alanine + ATP = UDP-N-acetyl-alpha-D-muramoyl-L-alanine + ADP + phosphate + H(+). The protein operates within cell wall biogenesis; peptidoglycan biosynthesis. Its function is as follows. Cell wall formation. The protein is UDP-N-acetylmuramate--L-alanine ligase of Treponema pallidum (strain Nichols).